We begin with the raw amino-acid sequence, 240 residues long: Ribosomal RNA small subunit methyltransferase G (240 aa).

Residues Gly-80, Phe-85, 131–132, and Arg-150 contribute to the S-adenosyl-L-methionine site; that span reads AE.

It belongs to the methyltransferase superfamily. RNA methyltransferase RsmG family.

The protein resides in the cytoplasm. Its function is as follows. Specifically methylates the N7 position of a guanine in 16S rRNA. The chain is Ribosomal RNA small subunit methyltransferase G from Dictyoglomus thermophilum (strain ATCC 35947 / DSM 3960 / H-6-12).